A 392-amino-acid polypeptide reads, in one-letter code: Autophagy-related protein 21 (392 aa).

WD repeat units follow at residues 200–240 and 250–289; these read VHQS…NDEP and SRPS…TEAD. A L/FRRG motif motif is present at residues 246–250; that stretch reads FRRGS.

The protein belongs to the WD repeat PROPPIN family.

Its subcellular location is the cytoplasm. The protein resides in the membrane. It is found in the vacuole membrane. In terms of biological role, required for cytoplasm to vacuole transport (Cvt) vesicles formation and mitophagy. Involved in binding of phosphatidylethanolamine to ATG8 and in recruitment of ATG8 and ATG5 to the pre-autophagosomal structure. Protects ATG8 from ARG4-mediated cleavage. This Kluyveromyces lactis (strain ATCC 8585 / CBS 2359 / DSM 70799 / NBRC 1267 / NRRL Y-1140 / WM37) (Yeast) protein is Autophagy-related protein 21 (ATG21).